Here is a 362-residue protein sequence, read N- to C-terminus: Myricetin 3'/5'-O-methyltransferase 1 (362 aa).

Aspartate 229 is a binding site for S-adenosyl-L-methionine. Histidine 267 serves as the catalytic Proton acceptor.

Belongs to the class I-like SAM-binding methyltransferase superfamily. Cation-independent O-methyltransferase family. Homodimer. Mainly expressed in leaves secreting glandular trichomes types 1 and 4 and, to a lesser extent, in storage trichomes type 6.

It carries out the reaction myricetin + S-adenosyl-L-methionine = laricitrin + S-adenosyl-L-homocysteine + H(+). It catalyses the reaction laricitrin + S-adenosyl-L-methionine = syringetin + S-adenosyl-L-homocysteine + H(+). The catalysed reaction is a 3'-hydroxyflavone + S-adenosyl-L-methionine = a 3'-methoxyflavone + S-adenosyl-L-homocysteine + H(+). The enzyme catalyses a 5'-hydroxy-3'-methoxyflavone + S-adenosyl-L-methionine = a 3',5'-dimethoxyflavone + S-adenosyl-L-homocysteine + H(+). It carries out the reaction quercetin + S-adenosyl-L-methionine = isorhamnetin + S-adenosyl-L-homocysteine + H(+). It catalyses the reaction rhamnetin + S-adenosyl-L-methionine = rhamnacene + S-adenosyl-L-homocysteine + H(+). The catalysed reaction is 3',4',5,7-tetrahydroxy-3-methoxyflavone + S-adenosyl-L-methionine = 3,3'-O-dimethylquercetin + S-adenosyl-L-homocysteine + H(+). The protein operates within flavonoid metabolism. Flavonoid 3'/5'-O-methyltransferase involved in the biosynthesis of polymethoxylated flavonoids natural products such as myricetin derivatives, aroma compounds possessing antioxidant properties and exhibiting pharmacological activities such as anti-carcinogen, anti-viral, anti-thrombotic, anti-diabetic, anti-atherosclerotic, and anti-inflammatory effects. Catalyzes S-adenosylmethionine-dependent regioselective 3'/5'-O-methylation of flavonoids; active on various hydroxylated flavonoid substrates, including myricetin and quercetin, but inactive toward kaempferol. Mediates the formation of 3'-methyl derivatives from quercetin, myricetin, 3-methyl quercetin and 7-methyl quercetin (rhamnetin), producing 3'-methyl quercetin (isorhamnetin), 3'-methyl myricetin (laricitrin), 3,3'-dimethyl quercetin (3-O-methylisorhamnetin) and 7,3'-dimethyl quercetin (7-O-methylisorhamnetin), respectively. Triggers the 5'-O-methylation of 3'-methyl myricetin (laricitrin), thus leading to production of 3',5'-dimethyl myricetin (syringetin). This Solanum habrochaites (Wild tomato) protein is Myricetin 3'/5'-O-methyltransferase 1.